A 1499-amino-acid chain; its full sequence is Pleiotropic ABC efflux transporter of multiple drugs CDR1 (1499 aa).

Over residues 1–11 (MSLASDKKDAD) the composition is skewed to basic and acidic residues. The segment at 1–29 (MSLASDKKDADVASTTTTAQDDDNLSTYH) is disordered. Residues N24, N96, and N99 are each glycosylated (N-linked (GlcNAc...) asparagine). One can recognise an ABC transporter 1 domain in the interval 146–399 (VYNTVVPSTA…FQKMGYVSPE (254 aa)). S307 bears the Phosphoserine mark. Residue N323 is glycosylated (N-linked (GlcNAc...) asparagine). The residue at position 484 (S484) is a Phosphoserine. The helical transmembrane segment at 510 to 530 (GVTLFMVIGNSSMAFILGSMF) threads the bilayer. N537 is a glycosylation site (N-linked (GlcNAc...) asparagine). Transmembrane regions (helical) follow at residues 548–568 (AMFF…FSLF), 597–617 (VPAK…LVNF), 622–642 (GVFF…SHLF), 654–674 (AAMV…GFAI), and 763–783 (GFGI…ILCE). N-linked (GlcNAc...) asparagine glycosylation is present at N813. The 243-residue stretch at 857 to 1099 (FHWRNLCYDV…TMIDYFESHG (243 aa)) folds into the ABC transporter 2 domain. Residue 893–900 (GASGAGKT) coordinates ATP. The N-linked (GlcNAc...) asparagine glycan is linked to N1159. Helical transmembrane passes span 1193 to 1213 (YLWS…FTFF), 1228 to 1248 (AVFM…PSFV), and 1278 to 1298 (IPWN…AIGF). N1301 carries N-linked (GlcNAc...) asparagine glycosylation. A run of 2 helical transmembrane segments spans residues 1314–1334 (LFWL…LFCI) and 1342–1362 (AAAN…GVLV). N-linked (GlcNAc...) asparagine glycosylation occurs at N1412. The helical transmembrane segment at 1466 to 1486 (WGIFICYIAFNYIAGIFLYWL) threads the bilayer.

It belongs to the ABC transporter superfamily. Post-translationally, phosphorylated at Ser-307 and Ser-484. Ser-307 and Ser-484 are dephosphorylated on glucose depletion and independently rephosphorylated during glucose exposure or under stress.

The protein localises to the cell membrane. Inhibited by clorgyline. Inhibited by RC21v3, a 4-methoxy-2,3,6-trimethylbenzenesulphonyl derivative of the D-octapeptide D-FFKWQRRR, via the interaction with the ectodomain. FK506, enniatin, milbemycin alpha-11, and milbemycin beta-9 also inhibit CDR1 activity. Inhibited by milbemycin A3/A4 oxim derivatives. Its function is as follows. Pleiotropic ABC efflux transporter that transports and confers resistance to structurally and functionally unrelated compounds including rhodamine 6G, Nile red, caspofungin, cycloheximide, or azoles such as fluconazole, itraconazole, ketoconazole, posaconazole, voriconazole, and isavuconazole. Chlorbromuron, itraconazole, yohimbine, ketoconazole, miconazole, clotrimazole, DE-11, tamoxifen, quinidine, verapamil can compete for rhodamine 6G's binding site(s) while compounds such as propanil, chloramphenicol, benomyl, voriconazole, tritylimidazole, ketoconazole, miconazole, tamoxifen, gefitinib shared binding site(s) with fluconazole. Nile red mediated efflux appears to be relatively more specific since only five compounds such as ZW3-12, rhodamine 123, miconazole, clotrimazole, and itraconazole can inhibit its accumulation. Does not use as substrates 4-nitroquinoline 1-oxide (4-NQO) and disulfiram. Does not play a role in the azole resistance in mature biofilms. In Candida glabrata (strain ATCC 2001 / BCRC 20586 / JCM 3761 / NBRC 0622 / NRRL Y-65 / CBS 138) (Yeast), this protein is Pleiotropic ABC efflux transporter of multiple drugs CDR1.